Reading from the N-terminus, the 216-residue chain is MIITIDGPSGTGKSTVAKALAQRLKFNYCNTGAMYRTLAYTHLQEPWNCLSIQELIDNPPFSFSFISEQPLEAFLDGHRLSEELGTQEVANAASRLSQLPEVRSFMHKLQRKYAELGNCVFEGRDMGSKVFPDADVKIFLTASAEVRALRRLKDLPKGSLSQEALHAELVKRDEADSRRIHDPLVIPEGAIVLDSSDLTISQVLEKILALVSPEMP.

Position 7 to 15 (7 to 15 (GPSGTGKST)) interacts with ATP.

The protein belongs to the cytidylate kinase family. Type 1 subfamily.

It is found in the cytoplasm. It catalyses the reaction CMP + ATP = CDP + ADP. The enzyme catalyses dCMP + ATP = dCDP + ADP. The polypeptide is Cytidylate kinase (Chlamydia felis (strain Fe/C-56) (Chlamydophila felis)).